A 202-amino-acid polypeptide reads, in one-letter code: Dephospho-CoA kinase (202 aa).

The DPCK domain maps to 3 to 201 (AIGLTGGIGS…QRYLGFAAAA (199 aa)). Residue 11–16 (GSGKTT) participates in ATP binding.

It belongs to the CoaE family.

The protein localises to the cytoplasm. It catalyses the reaction 3'-dephospho-CoA + ATP = ADP + CoA + H(+). It functions in the pathway cofactor biosynthesis; coenzyme A biosynthesis; CoA from (R)-pantothenate: step 5/5. Functionally, catalyzes the phosphorylation of the 3'-hydroxyl group of dephosphocoenzyme A to form coenzyme A. This is Dephospho-CoA kinase from Burkholderia lata (strain ATCC 17760 / DSM 23089 / LMG 22485 / NCIMB 9086 / R18194 / 383).